The sequence spans 177 residues: Large ribosomal subunit protein uL10 (177 aa).

Belongs to the universal ribosomal protein uL10 family. As to quaternary structure, part of the ribosomal stalk of the 50S ribosomal subunit. The N-terminus interacts with L11 and the large rRNA to form the base of the stalk. The C-terminus forms an elongated spine to which L12 dimers bind in a sequential fashion forming a multimeric L10(L12)X complex.

Forms part of the ribosomal stalk, playing a central role in the interaction of the ribosome with GTP-bound translation factors. This is Large ribosomal subunit protein uL10 from Leptospira interrogans serogroup Icterohaemorrhagiae serovar copenhageni (strain Fiocruz L1-130).